The primary structure comprises 406 residues: 3-oxoacyl-[acyl-carrier-protein] synthase 1 (406 aa).

The 403-residue stretch at 1–403 (MKRAVITGLG…GTNATLVMRK (403 aa)) folds into the Ketosynthase family 3 (KS3) domain. Active-site for beta-ketoacyl synthase activity residues include C163, H298, and H333.

The protein belongs to the thiolase-like superfamily. Beta-ketoacyl-ACP synthases family. Homodimer.

It is found in the cytoplasm. It catalyses the reaction a fatty acyl-[ACP] + malonyl-[ACP] + H(+) = a 3-oxoacyl-[ACP] + holo-[ACP] + CO2. It carries out the reaction (3Z)-decenoyl-[ACP] + malonyl-[ACP] + H(+) = 3-oxo-(5Z)-dodecenoyl-[ACP] + holo-[ACP] + CO2. The protein operates within lipid metabolism; fatty acid biosynthesis. Its function is as follows. Involved in the type II fatty acid elongation cycle. Catalyzes the elongation of a wide range of acyl-ACP by the addition of two carbons from malonyl-ACP to an acyl acceptor. Can also use unsaturated fatty acids. Catalyzes a key reaction in unsaturated fatty acid (UFA) synthesis, the elongation of the cis-3-decenoyl-ACP produced by FabA. This chain is 3-oxoacyl-[acyl-carrier-protein] synthase 1 (fabB), found in Escherichia coli O6:H1 (strain CFT073 / ATCC 700928 / UPEC).